The chain runs to 117 residues: Ribosomal silencing factor RsfS (117 aa).

The protein belongs to the Iojap/RsfS family. As to quaternary structure, interacts with ribosomal protein uL14 (rplN).

It is found in the cytoplasm. In terms of biological role, functions as a ribosomal silencing factor. Interacts with ribosomal protein uL14 (rplN), blocking formation of intersubunit bridge B8. Prevents association of the 30S and 50S ribosomal subunits and the formation of functional ribosomes, thus repressing translation. The sequence is that of Ribosomal silencing factor RsfS from Halalkalibacterium halodurans (strain ATCC BAA-125 / DSM 18197 / FERM 7344 / JCM 9153 / C-125) (Bacillus halodurans).